The sequence spans 496 residues: Amidophosphoribosyltransferase (496 aa).

The propeptide occupies 1 to 21; that stretch reads MNQSHSFPTDDPLDGDTLHEE. The active-site Nucleophile is the cysteine 22. One can recognise a Glutamine amidotransferase type-2 domain in the interval 22-241; the sequence is CGVFGILGHP…NGEVIICEIQ (220 aa).

This sequence in the C-terminal section; belongs to the purine/pyrimidine phosphoribosyltransferase family.

It catalyses the reaction 5-phospho-beta-D-ribosylamine + L-glutamate + diphosphate = 5-phospho-alpha-D-ribose 1-diphosphate + L-glutamine + H2O. Its pathway is purine metabolism; IMP biosynthesis via de novo pathway; N(1)-(5-phospho-D-ribosyl)glycinamide from 5-phospho-alpha-D-ribose 1-diphosphate: step 1/2. Its function is as follows. Catalyzes the formation of phosphoribosylamine from phosphoribosylpyrophosphate (PRPP) and glutamine. This Rhizobium etli (strain ATCC 51251 / DSM 11541 / JCM 21823 / NBRC 15573 / CFN 42) protein is Amidophosphoribosyltransferase.